Reading from the N-terminus, the 377-residue chain is Heat stress transcription factor B-2b (377 aa).

Residues 1 to 56 form a disordered region; the sequence is MPGEQTGETPTVAGVGGGGAGCSAGNSGGSSGCGAGGGGGGSGGGGGGGGDSQRSI. Positions 14–51 are enriched in gly residues; it reads GVGGGGAGCSAGNSGGSSGCGAGGGGGGSGGGGGGGGD. A DNA-binding region spans residues 57–151; sequence PTPFLTKTYQ…LLRDIQRRKI (95 aa). Residues 220 to 265 form a hydrophobic repeat HR-A/B region; it reads TTSCTTAPELVEENERLRKDNERLRKEMTKLKGLYANIYTLMANFT. Positions 323 to 327 match the Nuclear localization signal motif; sequence KRARR. The tract at residues 326-377 is disordered; that stretch reads RREEELGAAEEEDDDRREAAAQEGEQSSDVKAEPMEENNSGNHNGSWLELGK. Residues 331-340 show a composition bias toward acidic residues; it reads LGAAEEEDDD.

The protein belongs to the HSF family. Class B subfamily. As to quaternary structure, homotrimer. In terms of processing, exhibits temperature-dependent phosphorylation.

The protein localises to the nucleus. In terms of biological role, transcriptional regulator that specifically binds DNA sequence 5'-AGAAnnTTCT-3' known as heat shock promoter elements (HSE). The chain is Heat stress transcription factor B-2b (HSFB2B) from Arabidopsis thaliana (Mouse-ear cress).